A 112-amino-acid polypeptide reads, in one-letter code: Large ribosomal subunit protein eL31 (112 aa).

Belongs to the eukaryotic ribosomal protein eL31 family. In terms of assembly, component of the large ribosomal subunit. Mature ribosomes consist of a small (40S) and a large (60S) subunit. The 40S subunit contains about 32 different proteins and 1 molecule of RNA (18S). The 60S subunit contains 45 different proteins and 3 molecules of RNA (25S, 5.8S and 5S).

It is found in the cytoplasm. Component of the ribosome, a large ribonucleoprotein complex responsible for the synthesis of proteins in the cell. The small ribosomal subunit (SSU) binds messenger RNAs (mRNAs) and translates the encoded message by selecting cognate aminoacyl-transfer RNA (tRNA) molecules. The large subunit (LSU) contains the ribosomal catalytic site termed the peptidyl transferase center (PTC), which catalyzes the formation of peptide bonds, thereby polymerizing the amino acids delivered by tRNAs into a polypeptide chain. The nascent polypeptides leave the ribosome through a tunnel in the LSU and interact with protein factors that function in enzymatic processing, targeting, and the membrane insertion of nascent chains at the exit of the ribosomal tunnel. In Candida albicans (strain SC5314 / ATCC MYA-2876) (Yeast), this protein is Large ribosomal subunit protein eL31.